Reading from the N-terminus, the 277-residue chain is ATP synthase subunit delta (277 aa).

This sequence belongs to the ATPase delta chain family. As to quaternary structure, F-type ATPases have 2 components, F(1) - the catalytic core - and F(0) - the membrane proton channel. F(1) has five subunits: alpha(3), beta(3), gamma(1), delta(1), epsilon(1). F(0) has three main subunits: a(1), b(2) and c(10-14). The alpha and beta chains form an alternating ring which encloses part of the gamma chain. F(1) is attached to F(0) by a central stalk formed by the gamma and epsilon chains, while a peripheral stalk is formed by the delta and b chains.

The protein localises to the cell membrane. Functionally, f(1)F(0) ATP synthase produces ATP from ADP in the presence of a proton or sodium gradient. F-type ATPases consist of two structural domains, F(1) containing the extramembraneous catalytic core and F(0) containing the membrane proton channel, linked together by a central stalk and a peripheral stalk. During catalysis, ATP synthesis in the catalytic domain of F(1) is coupled via a rotary mechanism of the central stalk subunits to proton translocation. In terms of biological role, this protein is part of the stalk that links CF(0) to CF(1). It either transmits conformational changes from CF(0) to CF(1) or is implicated in proton conduction. The protein is ATP synthase subunit delta of Frankia alni (strain DSM 45986 / CECT 9034 / ACN14a).